The following is a 55-amino-acid chain: Large ribosomal subunit protein bL33 (55 aa).

The protein belongs to the bacterial ribosomal protein bL33 family.

This is Large ribosomal subunit protein bL33 from Phenylobacterium zucineum (strain HLK1).